The chain runs to 366 residues: MFCGSPFLGISSWSLASAALCPPSCSFSAGRDLRCDAEVPEVKWTAFVRTLVTRPLSADDVWDFVSTFAHCRLALSWPVGAELRFATSDMLGITQAEVAKLSRRYGCCPGMDLTVIGVTIFAEVSALVLVGECGEIYAFNGVFDDALYRLAEDAFGLWKHGLRRFEPVYGSKCLTETGASFFGGMSGVDDVLAFAVSFDKALVPLPWPRGAFFEFAVPGRPEKRWRLIPGGGVAVVIGRFFGRGVTSPLLRRQRVLMDQVGRVYAASLDGGAVVRLSDSFRAFLAMGVRKLFKNHRFPPGHLWTMQLPVTCVHAPVIDLPAVYQLSPHMVERGMPVASCEASTVVRGDCEETETEESTSGDSVLVC.

Belongs to the herpesviridae US22 family.

The protein is Protein U1 (U1) of Human herpesvirus 6A (strain Uganda-1102) (HHV-6 variant A).